The sequence spans 869 residues: DNA mismatch repair protein MutS (869 aa).

619 to 626 (GPNMAGKS) lines the ATP pocket.

Belongs to the DNA mismatch repair MutS family.

This protein is involved in the repair of mismatches in DNA. It is possible that it carries out the mismatch recognition step. This protein has a weak ATPase activity. The chain is DNA mismatch repair protein MutS from Caldanaerobacter subterraneus subsp. tengcongensis (strain DSM 15242 / JCM 11007 / NBRC 100824 / MB4) (Thermoanaerobacter tengcongensis).